A 93-amino-acid chain; its full sequence is Small ribosomal subunit protein uS19c (93 aa).

This sequence belongs to the universal ribosomal protein uS19 family.

The protein localises to the plastid. The protein resides in the chloroplast. Its function is as follows. Protein S19 forms a complex with S13 that binds strongly to the 16S ribosomal RNA. This Zea mays (Maize) protein is Small ribosomal subunit protein uS19c (rps19-A).